Here is a 313-residue protein sequence, read N- to C-terminus: WUSCHEL-related homeobox 5 (313 aa).

Positions 1–32 (METTTTTLGGGGGGRAGGFSDPPSPLSPPLSP) are disordered. Gly residues predominate over residues 8 to 17 (LGGGGGGRAG). The segment covering 22 to 31 (PPSPLSPPLS) has biased composition (pro residues). The segment at residues 40-104 (LANARWTPTK…NHKARQRQKQ (65 aa)) is a DNA-binding region (homeobox; WUS-type). 2 disordered regions span residues 224-247 (AAGR…GRET) and 271-313 (CAAV…SGGR). Residues 271 to 301 (CAAVSPTTPSASASFSWESESSDSPSSEAPP) show a composition bias toward low complexity.

It belongs to the WUS homeobox family.

The protein localises to the nucleus. In terms of biological role, transcription factor which may be involved in developmental processes. The polypeptide is WUSCHEL-related homeobox 5 (WOX5) (Oryza sativa subsp. japonica (Rice)).